We begin with the raw amino-acid sequence, 105 residues long: Thiosulfate sulfurtransferase GlpE (105 aa).

The Rhodanese domain occupies 16–104 (DKEDVVIADI…WEAAYSEKVE (89 aa)). Residue Cys-64 is the Cysteine persulfide intermediate of the active site.

The protein belongs to the GlpE family.

The protein localises to the cytoplasm. The enzyme catalyses thiosulfate + hydrogen cyanide = thiocyanate + sulfite + 2 H(+). It carries out the reaction thiosulfate + [thioredoxin]-dithiol = [thioredoxin]-disulfide + hydrogen sulfide + sulfite + 2 H(+). In terms of biological role, transferase that catalyzes the transfer of sulfur from thiosulfate to thiophilic acceptors such as cyanide or dithiols. May function in a CysM-independent thiosulfate assimilation pathway by catalyzing the conversion of thiosulfate to sulfite, which can then be used for L-cysteine biosynthesis. The sequence is that of Thiosulfate sulfurtransferase GlpE from Pseudoalteromonas translucida (strain TAC 125).